Reading from the N-terminus, the 396-residue chain is Elongation factor Tu (396 aa).

One can recognise a tr-type G domain in the interval 10-206 (KPHVNVGTIG…AVDAYIPTPQ (197 aa)). The segment at 19–26 (GHVDHGKT) is G1. 19–26 (GHVDHGKT) is a GTP binding site. Thr-26 contributes to the Mg(2+) binding site. The interval 60–64 (GITIA) is G2. The segment at 81–84 (DCPG) is G3. GTP-binding positions include 81-85 (DCPGH) and 136-139 (NKVD). Residues 136-139 (NKVD) are G4. The interval 174–176 (SAL) is G5.

Belongs to the TRAFAC class translation factor GTPase superfamily. Classic translation factor GTPase family. EF-Tu/EF-1A subfamily. As to quaternary structure, monomer.

Its subcellular location is the cytoplasm. The enzyme catalyses GTP + H2O = GDP + phosphate + H(+). Functionally, GTP hydrolase that promotes the GTP-dependent binding of aminoacyl-tRNA to the A-site of ribosomes during protein biosynthesis. The polypeptide is Elongation factor Tu (Anaeromyxobacter dehalogenans (strain 2CP-C)).